Reading from the N-terminus, the 857-residue chain is Alanine--tRNA ligase (857 aa).

The Zn(2+) site is built by His556, His560, Cys658, and His662.

This sequence belongs to the class-II aminoacyl-tRNA synthetase family. It depends on Zn(2+) as a cofactor.

The protein resides in the cytoplasm. The enzyme catalyses tRNA(Ala) + L-alanine + ATP = L-alanyl-tRNA(Ala) + AMP + diphosphate. Catalyzes the attachment of alanine to tRNA(Ala) in a two-step reaction: alanine is first activated by ATP to form Ala-AMP and then transferred to the acceptor end of tRNA(Ala). Also edits incorrectly charged Ser-tRNA(Ala) and Gly-tRNA(Ala) via its editing domain. This Sulfurovum sp. (strain NBC37-1) protein is Alanine--tRNA ligase.